The chain runs to 431 residues: Enolase (431 aa).

Gln-164 is a (2R)-2-phosphoglycerate binding site. The active-site Proton donor is the Glu-206. Residues Asp-243, Glu-286, and Asp-313 each contribute to the Mg(2+) site. 4 residues coordinate (2R)-2-phosphoglycerate: Lys-338, Arg-367, Ser-368, and Lys-389. The Proton acceptor role is filled by Lys-338.

This sequence belongs to the enolase family. Mg(2+) serves as cofactor.

It is found in the cytoplasm. The protein resides in the secreted. Its subcellular location is the cell surface. It carries out the reaction (2R)-2-phosphoglycerate = phosphoenolpyruvate + H2O. The protein operates within carbohydrate degradation; glycolysis; pyruvate from D-glyceraldehyde 3-phosphate: step 4/5. Catalyzes the reversible conversion of 2-phosphoglycerate (2-PG) into phosphoenolpyruvate (PEP). It is essential for the degradation of carbohydrates via glycolysis. This chain is Enolase, found in Chloroflexus aggregans (strain MD-66 / DSM 9485).